The chain runs to 69 residues: DNA gyrase inhibitor YacG (69 aa).

The span at 1–15 shows a compositional bias: basic and acidic residues; that stretch reads MSDEPEHTAKVEPLR. Positions 1–22 are disordered; the sequence is MSDEPEHTAKVEPLRKPLPCPE. Zn(2+)-binding residues include Cys-20, Cys-23, Cys-35, and Cys-39.

It belongs to the DNA gyrase inhibitor YacG family. In terms of assembly, interacts with GyrB. Requires Zn(2+) as cofactor.

Inhibits all the catalytic activities of DNA gyrase by preventing its interaction with DNA. Acts by binding directly to the C-terminal domain of GyrB, which probably disrupts DNA binding by the gyrase. In Allorhizobium ampelinum (strain ATCC BAA-846 / DSM 112012 / S4) (Agrobacterium vitis (strain S4)), this protein is DNA gyrase inhibitor YacG.